Reading from the N-terminus, the 118-residue chain is Vitelline membrane protein Vm32E (118 aa).

The signal sequence occupies residues 1-17 (MKIVALTLVAFVALAGA). Residues 36–75 (GYPAPPCPTNYLFSCQPNLAPAPCAQEAQAPAYGSAGAYT) enclose the VM domain.

Belongs to the vitelline membrane family.

It is found in the secreted. Major early eggshell protein. This is Vitelline membrane protein Vm32E from Drosophila sechellia (Fruit fly).